The following is a 72-amino-acid chain: Translation initiation factor IF-1 (72 aa).

Residues 1–72 (MAKEDVIEVE…NRGRIVYRYK (72 aa)) form the S1-like domain.

The protein belongs to the IF-1 family. In terms of assembly, component of the 30S ribosomal translation pre-initiation complex which assembles on the 30S ribosome in the order IF-2 and IF-3, IF-1 and N-formylmethionyl-tRNA(fMet); mRNA recruitment can occur at any time during PIC assembly.

The protein localises to the cytoplasm. In terms of biological role, one of the essential components for the initiation of protein synthesis. Stabilizes the binding of IF-2 and IF-3 on the 30S subunit to which N-formylmethionyl-tRNA(fMet) subsequently binds. Helps modulate mRNA selection, yielding the 30S pre-initiation complex (PIC). Upon addition of the 50S ribosomal subunit IF-1, IF-2 and IF-3 are released leaving the mature 70S translation initiation complex. This Moorella thermoacetica (strain ATCC 39073 / JCM 9320) protein is Translation initiation factor IF-1.